Here is a 242-residue protein sequence, read N- to C-terminus: Uridylate kinase (242 aa).

An ATP-binding site is contributed by K16 to G19. Position 58 (G58) interacts with UMP. G59 and R63 together coordinate ATP. UMP contacts are provided by residues D78 and T139–T146. 4 residues coordinate ATP: T166, Q167, Y172, and D175.

The protein belongs to the UMP kinase family. Homohexamer.

The protein resides in the cytoplasm. The enzyme catalyses UMP + ATP = UDP + ADP. The protein operates within pyrimidine metabolism; CTP biosynthesis via de novo pathway; UDP from UMP (UMPK route): step 1/1. Inhibited by UTP. In terms of biological role, catalyzes the reversible phosphorylation of UMP to UDP. The chain is Uridylate kinase from Rickettsia conorii (strain ATCC VR-613 / Malish 7).